An 85-amino-acid chain; its full sequence is UPF0335 protein WP0746 (85 aa).

It belongs to the UPF0335 family.

The polypeptide is UPF0335 protein WP0746 (Wolbachia pipientis subsp. Culex pipiens (strain wPip)).